The primary structure comprises 203 residues: Urease accessory protein UreE (203 aa).

Residues 170-190 are compositionally biased toward basic and acidic residues; it reads EHHGHSHSRSHDHDHDHDHQH. Positions 170 to 203 are disordered; the sequence is EHHGHSHSRSHDHDHDHDHQHGPSCSHGHHHGHR.

This sequence belongs to the UreE family.

The protein resides in the cytoplasm. Its function is as follows. Involved in urease metallocenter assembly. Binds nickel. Probably functions as a nickel donor during metallocenter assembly. The sequence is that of Urease accessory protein UreE from Burkholderia pseudomallei (strain 1710b).